A 308-amino-acid chain; its full sequence is Acetyl-coenzyme A carboxylase carboxyl transferase subunit alpha (308 aa).

The region spanning 36 to 286 (ELEKEVSSVY…ESYFLKAFEE (251 aa)) is the CoA carboxyltransferase C-terminal domain.

This sequence belongs to the AccA family. As to quaternary structure, acetyl-CoA carboxylase is a heterohexamer composed of biotin carboxyl carrier protein (AccB), biotin carboxylase (AccC) and two subunits each of ACCase subunit alpha (AccA) and ACCase subunit beta (AccD).

The protein localises to the cytoplasm. The enzyme catalyses N(6)-carboxybiotinyl-L-lysyl-[protein] + acetyl-CoA = N(6)-biotinyl-L-lysyl-[protein] + malonyl-CoA. Its pathway is lipid metabolism; malonyl-CoA biosynthesis; malonyl-CoA from acetyl-CoA: step 1/1. In terms of biological role, component of the acetyl coenzyme A carboxylase (ACC) complex. First, biotin carboxylase catalyzes the carboxylation of biotin on its carrier protein (BCCP) and then the CO(2) group is transferred by the carboxyltransferase to acetyl-CoA to form malonyl-CoA. The chain is Acetyl-coenzyme A carboxylase carboxyl transferase subunit alpha from Helicobacter hepaticus (strain ATCC 51449 / 3B1).